A 531-amino-acid polypeptide reads, in one-letter code: 5-(hydroxymethyl)furfural oxidase (531 aa).

Residues 15 to 16, 36 to 37, Trp-68, Leu-94, Gly-98, 102 to 105, Val-233, and Trp-466 contribute to the FAD site; these read TA, EA, and NMVV. His-467 (proton acceptor) is an active-site residue. Residues Ala-501 and 512-513 contribute to the FAD site; that span reads TN.

It belongs to the GMC oxidoreductase family. Monomer. FAD is required as a cofactor.

It carries out the reaction 5-hydroxymethylfurfural + 3 O2 + 2 H2O = 2,5-dicarboxyfuran + 3 H2O2 + 2 H(+). The enzyme catalyses benzylthiol + O2 = benzothialdehyde + H2O2. Functionally, involved in the degradation and detoxification of 5-(hydroxymethyl)furfural (HMF) by mediating its oxidation to furan-2,5-dicarboxylate (FDCA), a biobased platform chemical for the production of polymers. Active with a wide range of aromatic and aliphatic primary alcohols and aldehydes: acts on alcohol groups and requires the spontaneous hydration of aldehyde groups for their oxidation. To a lesser extent, is also able to catalyze the oxidation of thiols that are structurally similar to its alcohol substrates, yielding the corresponding thiocarbonyls. The sequence is that of 5-(hydroxymethyl)furfural oxidase from Methylovorus sp. (strain MP688).